Reading from the N-terminus, the 438-residue chain is Fumarate hydratase class II (438 aa).

Substrate-binding positions include 76 to 78, 101 to 104, 111 to 113, and Thr-159; these read SGT, HPND, and SSN. Catalysis depends on His-160, which acts as the Proton donor/acceptor. The active site involves Ser-291. Residues Ser-292 and 297-299 each bind substrate; that span reads KTN.

Belongs to the class-II fumarase/aspartase family. Fumarase subfamily. As to quaternary structure, homotetramer.

It localises to the cytoplasm. It catalyses the reaction (S)-malate = fumarate + H2O. It functions in the pathway carbohydrate metabolism; tricarboxylic acid cycle; (S)-malate from fumarate: step 1/1. Functionally, involved in the TCA cycle. Catalyzes the stereospecific interconversion of fumarate to L-malate. This chain is Fumarate hydratase class II, found in Saccharolobus solfataricus (strain ATCC 35092 / DSM 1617 / JCM 11322 / P2) (Sulfolobus solfataricus).